A 428-amino-acid polypeptide reads, in one-letter code: Adenylosuccinate synthetase (428 aa).

GTP contacts are provided by residues 11 to 17 and 39 to 41; these read GDEGKGK and GHT. Residue Asp-12 is the Proton acceptor of the active site. The Mg(2+) site is built by Asp-12 and Gly-39. IMP is bound by residues 12-15, 37-40, Thr-130, Arg-144, Asn-226, Thr-241, and Arg-305; these read DEGK and NAGH. His-40 serves as the catalytic Proton donor. Residue 301-307 coordinates substrate; that stretch reads VTTGRKR. GTP is bound by residues Arg-307, 333 to 335, and 415 to 417; these read KLD and GTG.

Belongs to the adenylosuccinate synthetase family. As to quaternary structure, homodimer. The cofactor is Mg(2+).

Its subcellular location is the cytoplasm. The enzyme catalyses IMP + L-aspartate + GTP = N(6)-(1,2-dicarboxyethyl)-AMP + GDP + phosphate + 2 H(+). The protein operates within purine metabolism; AMP biosynthesis via de novo pathway; AMP from IMP: step 1/2. Functionally, plays an important role in the de novo pathway and in the salvage pathway of purine nucleotide biosynthesis. Catalyzes the first committed step in the biosynthesis of AMP from IMP. In Candida dubliniensis (strain CD36 / ATCC MYA-646 / CBS 7987 / NCPF 3949 / NRRL Y-17841) (Yeast), this protein is Adenylosuccinate synthetase.